Consider the following 122-residue polypeptide: Large ribosomal subunit protein uL14 (122 aa).

Belongs to the universal ribosomal protein uL14 family. As to quaternary structure, part of the 50S ribosomal subunit. Forms a cluster with proteins L3 and L19. In the 70S ribosome, L14 and L19 interact and together make contacts with the 16S rRNA in bridges B5 and B8.

Functionally, binds to 23S rRNA. Forms part of two intersubunit bridges in the 70S ribosome. In Cutibacterium acnes (strain DSM 16379 / KPA171202) (Propionibacterium acnes), this protein is Large ribosomal subunit protein uL14.